Here is a 498-residue protein sequence, read N- to C-terminus: Lysine--tRNA ligase (498 aa).

2 residues coordinate Mg(2+): Glu-407 and Glu-414.

The protein belongs to the class-II aminoacyl-tRNA synthetase family. In terms of assembly, homodimer. It depends on Mg(2+) as a cofactor.

Its subcellular location is the cytoplasm. The catalysed reaction is tRNA(Lys) + L-lysine + ATP = L-lysyl-tRNA(Lys) + AMP + diphosphate. The polypeptide is Lysine--tRNA ligase (Rhizobium johnstonii (strain DSM 114642 / LMG 32736 / 3841) (Rhizobium leguminosarum bv. viciae)).